The chain runs to 194 residues: Peptidyl-tRNA hydrolase (194 aa).

Position 19 (Tyr-19) interacts with tRNA. His-24 functions as the Proton acceptor in the catalytic mechanism. Residues Phe-69, Asn-71, and Asn-117 each coordinate tRNA.

Belongs to the PTH family. In terms of assembly, monomer.

The protein localises to the cytoplasm. It catalyses the reaction an N-acyl-L-alpha-aminoacyl-tRNA + H2O = an N-acyl-L-amino acid + a tRNA + H(+). Its function is as follows. Hydrolyzes ribosome-free peptidyl-tRNAs (with 1 or more amino acids incorporated), which drop off the ribosome during protein synthesis, or as a result of ribosome stalling. Catalyzes the release of premature peptidyl moieties from peptidyl-tRNA molecules trapped in stalled 50S ribosomal subunits, and thus maintains levels of free tRNAs and 50S ribosomes. The sequence is that of Peptidyl-tRNA hydrolase from Neorickettsia sennetsu (strain ATCC VR-367 / Miyayama) (Ehrlichia sennetsu).